The primary structure comprises 122 residues: Large ribosomal subunit protein uL14 (122 aa).

The protein belongs to the universal ribosomal protein uL14 family. Part of the 50S ribosomal subunit. Forms a cluster with proteins L3 and L19. In the 70S ribosome, L14 and L19 interact and together make contacts with the 16S rRNA in bridges B5 and B8.

Functionally, binds to 23S rRNA. Forms part of two intersubunit bridges in the 70S ribosome. This is Large ribosomal subunit protein uL14 from Kocuria rhizophila (strain ATCC 9341 / DSM 348 / NBRC 103217 / DC2201).